Consider the following 212-residue polypeptide: Probable plastid-lipid-associated protein 11, chloroplastic (212 aa).

The transit peptide at methionine 1–serine 25 directs the protein to the chloroplast.

It belongs to the PAP/fibrillin family.

The protein resides in the plastid. The protein localises to the chloroplast thylakoid. This chain is Probable plastid-lipid-associated protein 11, chloroplastic (PAP11), found in Arabidopsis thaliana (Mouse-ear cress).